The chain runs to 20 residues: Brevinin-1SPd (20 aa).

A disulfide bond links Cys-14 and Cys-20.

Expressed by the skin glands.

It is found in the secreted. Its function is as follows. Antimicrobial peptide with activity against Gram-negative and Gram-positive bacteria (MIC=13 uM against E.coli, MIC=3 uM against S.aureus) and fungi (MIC=3 uM against C.albicans). Shows hemolytic activity on human erythrocytes (HC(50)=8 uM). The chain is Brevinin-1SPd from Lithobates septentrionalis (Mink frog).